A 272-amino-acid chain; its full sequence is 3',5'-cyclic adenosine monophosphate phosphodiesterase CpdA (272 aa).

7 residues coordinate Fe cation: Asp21, His23, Asp63, Asn93, His161, His200, and His202. AMP-binding positions include His23, Asp63, and 93-94; that span reads NH. His202 lines the AMP pocket.

Belongs to the cyclic nucleotide phosphodiesterase class-III family. Monomer. It depends on a divalent metal cation as a cofactor.

The enzyme catalyses 3',5'-cyclic AMP + H2O = AMP + H(+). Activated by iron. Other divalent metal ions have no effect. In terms of biological role, hydrolyzes cAMP to 5'-AMP. Plays an important regulatory role in modulating the intracellular concentration of cAMP, thereby influencing cAMP-dependent processes. Specifically required for regulation of virulence factors. Can also hydrolyze cGMP, but cGMP is unlikely to be synthesized by P.aeruginosa and cAMP is probably the biologically relevant substrate for CpdA in vivo. The chain is 3',5'-cyclic adenosine monophosphate phosphodiesterase CpdA from Pseudomonas aeruginosa.